The primary structure comprises 133 residues: Small ribosomal subunit protein uS8 (133 aa).

The protein belongs to the universal ribosomal protein uS8 family. As to quaternary structure, part of the 30S ribosomal subunit. Contacts proteins S5 and S12.

Its function is as follows. One of the primary rRNA binding proteins, it binds directly to 16S rRNA central domain where it helps coordinate assembly of the platform of the 30S subunit. This Cyanothece sp. (strain PCC 7425 / ATCC 29141) protein is Small ribosomal subunit protein uS8.